Consider the following 1953-residue polypeptide: Putative surface-exposed virulence protein BigA (1953 aa).

The N-terminal stretch at Met-1 to Ala-27 is a signal peptide. Disordered stretches follow at residues Asn-31–Ala-50, Gly-88–Asn-258, and Thr-1496–Leu-1517. The stretch at Pro-101–Asn-103 is one 1; truncated repeat. The tract at residues Pro-101–Ser-252 is 15 X 11 AA tandem repeats. Residues Gly-104–Gly-113 form a 2; truncated repeat. The 3; truncated repeat unit spans residues Gly-114–Gly-122. 11 repeat units span residues Gly-123 to Asp-133, Asp-134 to Asp-144, Asp-145 to Asp-155, Asp-156 to Asp-166, Asp-167 to Asp-177, Gly-178 to Asp-188, Asp-189 to Asp-199, Asp-200 to Asp-210, Asp-211 to Asp-221, Asp-222 to Asp-232, and Asp-233 to Asp-243. Acidic residues-rich tracts occupy residues Asp-141–Asp-177 and Asp-185–Pro-249. The 15; truncated repeat unit spans residues Asp-244–Ser-252. The 304-residue stretch at Ser-1649–Phe-1952 folds into the Autotransporter domain.

This Salmonella typhimurium (strain LT2 / SGSC1412 / ATCC 700720) protein is Putative surface-exposed virulence protein BigA (bigA).